A 245-amino-acid chain; its full sequence is Acetoacetate decarboxylase (245 aa).

Lysine 116 functions as the Schiff-base intermediate with acetoacetate in the catalytic mechanism.

The protein belongs to the ADC family.

The enzyme catalyses acetoacetate + H(+) = acetone + CO2. Catalyzes the conversion of acetoacetate to acetone and carbon dioxide. In Acidiphilium cryptum (strain JF-5), this protein is Acetoacetate decarboxylase.